The primary structure comprises 199 residues: NAD(P)H dehydrogenase (quinone) (199 aa).

The 187-residue stretch at 4–190 folds into the Flavodoxin-like domain; sequence VLVLYYSSYG…AMARFQGGHV (187 aa). Residues 10-15 and 78-80 each bind FMN; these read SSYGHI and TRF. Tyrosine 12 contributes to the NAD(+) binding site. Substrate is bound at residue tryptophan 98. FMN contacts are provided by residues 113–119 and histidine 134; that span reads STATQHG.

It belongs to the WrbA family. FMN is required as a cofactor.

It carries out the reaction a quinone + NADH + H(+) = a quinol + NAD(+). It catalyses the reaction a quinone + NADPH + H(+) = a quinol + NADP(+). This Azoarcus sp. (strain BH72) protein is NAD(P)H dehydrogenase (quinone).